We begin with the raw amino-acid sequence, 196 residues long: Protein hunchback (196 aa).

Disordered regions lie at residues 16–56, 63–82, and 156–196; these read SHHH…SHTN, LKQQ…QQPM, and LTPP…KYMA. Residues 17–29 are compositionally biased toward basic residues; it reads HHHHHHHAHHSHH. 2 stretches are compositionally biased toward low complexity: residues 33–43 and 65–80; these read SNSNASNSPHQ and QQQQ…QQQQ. Residues 177–196 are compositionally biased toward basic and acidic residues; it reads EPEKEHDLMSNSSEDMKYMA.

The protein belongs to the hunchback C2H2-type zinc-finger protein family.

The protein localises to the nucleus. Its function is as follows. Gap class segmentation protein that controls development of head structures. The sequence is that of Protein hunchback (hb) from Drosophila adunca (Fruit fly).